Here is a 277-residue protein sequence, read N- to C-terminus: Caspase-3 (277 aa).

Position 1 is an N-acetylmethionine (M1). 2 propeptides span residues 1-9 (MENTENSVD) and 10-28 (SKSI…ESMD). K11 is modified (N6-acetyllysine). S26 carries the post-translational modification Phosphoserine. Active-site residues include H121 and C163. Position 163 is an S-nitrosocysteine; in inhibited form (C163). A (Microbial infection) ADP-riboxanated arginine modification is found at R207.

Belongs to the peptidase C14A family. Heterotetramer that consists of two anti-parallel arranged heterodimers, each one formed by a 17 kDa (p17) and a 12 kDa (p12) subunit. Interacts with BIRC6/bruce. In terms of processing, cleavage by granzyme B, caspase-6, caspase-8 and caspase-10 generates the two active subunits. Additional processing of the propeptides is likely due to the autocatalytic activity of the activated protease. Active heterodimers between the small subunit of caspase-7 protease and the large subunit of caspase-3 also occur and vice versa. S-nitrosylated on its catalytic site cysteine in unstimulated human cell lines and denitrosylated upon activation of the Fas apoptotic pathway, associated with an increase in intracellular caspase activity. Fas therefore activates caspase-3 not only by inducing the cleavage of the caspase zymogen to its active subunits, but also by stimulating the denitrosylation of its active site thiol. Post-translationally, ubiquitinated by BIRC6; this activity is inhibited by DIABLO/SMAC. In terms of processing, (Microbial infection) ADP-riboxanation by C.violaceum CopC blocks CASP3 processing, preventing CASP3 activation and ability to recognize and cleave substrates. As to expression, highly expressed in lung, spleen, heart, liver and kidney. Moderate levels in brain and skeletal muscle, and low in testis. Also found in many cell lines, highest expression in cells of the immune system.

The protein localises to the cytoplasm. It carries out the reaction Strict requirement for an Asp residue at positions P1 and P4. It has a preferred cleavage sequence of Asp-Xaa-Xaa-Asp-|- with a hydrophobic amino-acid residue at P2 and a hydrophilic amino-acid residue at P3, although Val or Ala are also accepted at this position.. Inhibited by isatin sulfonamides. Inhibited by BIRC6; following inhibition of BIRC6-caspase binding by DIABLO/SMAC, BIRC6 is subjected to caspase cleavage, leading to an increase in active caspases. Functionally, thiol protease that acts as a major effector caspase involved in the execution phase of apoptosis. Following cleavage and activation by initiator caspases (CASP8, CASP9 and/or CASP10), mediates execution of apoptosis by catalyzing cleavage of many proteins. At the onset of apoptosis, it proteolytically cleaves poly(ADP-ribose) polymerase PARP1 at a '216-Asp-|-Gly-217' bond. Cleaves and activates sterol regulatory element binding proteins (SREBPs) between the basic helix-loop-helix leucine zipper domain and the membrane attachment domain. Cleaves and activates caspase-6, -7 and -9 (CASP6, CASP7 and CASP9, respectively). Cleaves and inactivates interleukin-18 (IL18). Involved in the cleavage of huntingtin. Triggers cell adhesion in sympathetic neurons through RET cleavage. Cleaves and inhibits serine/threonine-protein kinase AKT1 in response to oxidative stress. Acts as an inhibitor of type I interferon production during virus-induced apoptosis by mediating cleavage of antiviral proteins CGAS, IRF3 and MAVS, thereby preventing cytokine overproduction. Also involved in pyroptosis by mediating cleavage and activation of gasdermin-E (GSDME). Cleaves XRCC4 and phospholipid scramblase proteins XKR4, XKR8 and XKR9, leading to promote phosphatidylserine exposure on apoptotic cell surface. Cleaves BIRC6 following inhibition of BIRC6-caspase binding by DIABLO/SMAC. The sequence is that of Caspase-3 (CASP3) from Homo sapiens (Human).